Here is a 440-residue protein sequence, read N- to C-terminus: Aspartokinase (440 aa).

It belongs to the aspartokinase family.

It carries out the reaction L-aspartate + ATP = 4-phospho-L-aspartate + ADP. It functions in the pathway amino-acid biosynthesis; L-lysine biosynthesis via DAP pathway; (S)-tetrahydrodipicolinate from L-aspartate: step 1/4. It participates in amino-acid biosynthesis; L-methionine biosynthesis via de novo pathway; L-homoserine from L-aspartate: step 1/3. Its pathway is amino-acid biosynthesis; L-threonine biosynthesis; L-threonine from L-aspartate: step 1/5. In Chlamydia pneumoniae (Chlamydophila pneumoniae), this protein is Aspartokinase (lysC).